Here is a 152-residue protein sequence, read N- to C-terminus: Large ribosomal subunit protein bL34c (152 aa).

The N-terminal 91 residues, 1–91, are a transit peptide targeting the chloroplast; it reads MATLSLLSTG…DRCRRFVVRA (91 aa).

Component of the chloroplast large ribosomal subunit (LSU). Mature 70S chloroplast ribosomes of higher plants consist of a small (30S) and a large (50S) subunit. The 30S small subunit contains 1 molecule of ribosomal RNA (16S rRNA) and 24 different proteins. The 50S large subunit contains 3 rRNA molecules (23S, 5S and 4.5S rRNA) and 33 different proteins.

It localises to the plastid. Its subcellular location is the chloroplast. In terms of biological role, component of the chloroplast ribosome (chloro-ribosome), a dedicated translation machinery responsible for the synthesis of chloroplast genome-encoded proteins, including proteins of the transcription and translation machinery and components of the photosynthetic apparatus. This Spinacia oleracea (Spinach) protein is Large ribosomal subunit protein bL34c (RPL34).